We begin with the raw amino-acid sequence, 271 residues long: tRNA (guanine-N(7)-)-methyltransferase (271 aa).

Positions 95, 120, 147, and 175 each coordinate S-adenosyl-L-methionine. Residue D175 is part of the active site. Residues K179, D211, and 249-252 (THFE) contribute to the substrate site.

Belongs to the class I-like SAM-binding methyltransferase superfamily. TrmB family.

It catalyses the reaction guanosine(46) in tRNA + S-adenosyl-L-methionine = N(7)-methylguanosine(46) in tRNA + S-adenosyl-L-homocysteine. It functions in the pathway tRNA modification; N(7)-methylguanine-tRNA biosynthesis. Catalyzes the formation of N(7)-methylguanine at position 46 (m7G46) in tRNA. In Rhodopirellula baltica (strain DSM 10527 / NCIMB 13988 / SH1), this protein is tRNA (guanine-N(7)-)-methyltransferase.